We begin with the raw amino-acid sequence, 509 residues long: Methionine--tRNA ligase (509 aa).

Residues 12–22 (YYPSGDLHLGH) carry the 'HIGH' region motif. The 'KMSKS' region motif lies at 302–306 (KMSKS). Lys-305 is a binding site for ATP.

The protein belongs to the class-I aminoacyl-tRNA synthetase family. MetG type 2B subfamily. Monomer.

It is found in the cytoplasm. The enzyme catalyses tRNA(Met) + L-methionine + ATP = L-methionyl-tRNA(Met) + AMP + diphosphate. Is required not only for elongation of protein synthesis but also for the initiation of all mRNA translation through initiator tRNA(fMet) aminoacylation. The protein is Methionine--tRNA ligase (metG) of Mycoplasmopsis pulmonis (strain UAB CTIP) (Mycoplasma pulmonis).